Reading from the N-terminus, the 37-residue chain is Cytochrome b6-f complex subunit 5 (37 aa).

Residues 5 to 25 (FLFGIVLGLIPVTLAGLFVTA) traverse the membrane as a helical segment.

It belongs to the PetG family. In terms of assembly, the 4 large subunits of the cytochrome b6-f complex are cytochrome b6, subunit IV (17 kDa polypeptide, PetD), cytochrome f and the Rieske protein, while the 4 small subunits are PetG, PetL, PetM and PetN. The complex functions as a dimer.

It is found in the plastid. The protein localises to the chloroplast thylakoid membrane. Functionally, component of the cytochrome b6-f complex, which mediates electron transfer between photosystem II (PSII) and photosystem I (PSI), cyclic electron flow around PSI, and state transitions. PetG is required for either the stability or assembly of the cytochrome b6-f complex. The sequence is that of Cytochrome b6-f complex subunit 5 from Daucus carota (Wild carrot).